Consider the following 736-residue polypeptide: Polyribonucleotide nucleotidyltransferase (736 aa).

Residues D493 and D499 each coordinate Mg(2+). In terms of domain architecture, KH spans 560–619 (PQHAELVVNPDAIRMIIGPGGKNIKQITTVTGAAIDINDSGKISIFAPTSEAMEQAKQMI). The S1 motif domain maps to 629-703 (GKNYKGKVRK…SRKAVLLEEE (75 aa)). Residues 710 to 736 (EESSRFSKGNRNGDRSRHNNRERTRRT) are disordered. Residues 720 to 736 (RNGDRSRHNNRERTRRT) are compositionally biased toward basic and acidic residues.

This sequence belongs to the polyribonucleotide nucleotidyltransferase family. Mg(2+) serves as cofactor.

The protein resides in the cytoplasm. It carries out the reaction RNA(n+1) + phosphate = RNA(n) + a ribonucleoside 5'-diphosphate. Its function is as follows. Involved in mRNA degradation. Catalyzes the phosphorolysis of single-stranded polyribonucleotides processively in the 3'- to 5'-direction. In Lawsonia intracellularis (strain PHE/MN1-00), this protein is Polyribonucleotide nucleotidyltransferase.